Consider the following 102-residue polypeptide: Small ribosomal subunit protein uS10 (102 aa).

It belongs to the universal ribosomal protein uS10 family. In terms of assembly, part of the 30S ribosomal subunit.

In terms of biological role, involved in the binding of tRNA to the ribosomes. In Staphylococcus aureus (strain Mu3 / ATCC 700698), this protein is Small ribosomal subunit protein uS10.